Here is a 287-residue protein sequence, read N- to C-terminus: ATP synthase gamma chain (287 aa).

The protein belongs to the ATPase gamma chain family. In terms of assembly, F-type ATPases have 2 components, CF(1) - the catalytic core - and CF(0) - the membrane proton channel. CF(1) has five subunits: alpha(3), beta(3), gamma(1), delta(1), epsilon(1). CF(0) has three main subunits: a, b and c.

The protein localises to the cell inner membrane. Functionally, produces ATP from ADP in the presence of a proton gradient across the membrane. The gamma chain is believed to be important in regulating ATPase activity and the flow of protons through the CF(0) complex. The protein is ATP synthase gamma chain of Photorhabdus laumondii subsp. laumondii (strain DSM 15139 / CIP 105565 / TT01) (Photorhabdus luminescens subsp. laumondii).